A 362-amino-acid chain; its full sequence is Probable secreted beta-glucosidase UTH1 (362 aa).

An N-terminal signal peptide occupies residues 1 to 17 (MKLSALLALSASTAVLA).

The protein belongs to the SUN family.

It localises to the mitochondrion outer membrane. The protein resides in the secreted. Its subcellular location is the cell wall. Its function is as follows. Involved in aging, oxidative stress response, and in the regulation of mitochondrial biogenesis. Inactivation of UTH1 increases life span, leads to higher resistance to heat stress and to hydrogen peroxide, and increases sensitivity to the superoxide radical-generating drug paraquat and to copper. Also required for the selective autophagic degradation of mitochondria (mitophagy) in response to nitrogen starvation. May play a role in cell wall morphogenesis and septation. Involved in the remodeling of the cell wall during the various phases of yeast culture development and under various environmental conditions and plays a role in septation. Involved in cell sensitivity to boric acid. The polypeptide is Probable secreted beta-glucosidase UTH1 (UTH1) (Saccharomyces cerevisiae (strain YJM789) (Baker's yeast)).